Consider the following 359-residue polypeptide: Glycerol-1-phosphate dehydrogenase [NAD(P)+] (359 aa).

NAD(+) contacts are provided by residues 107–111 and 129–132; these read GRVID and TAAS. Residue Asp134 coordinates substrate. Ser138 serves as a coordination point for NAD(+). Position 181 (Asp181) interacts with substrate. Zn(2+)-binding residues include Asp181 and His261. Residue His265 participates in substrate binding. His277 lines the Zn(2+) pocket.

The protein belongs to the glycerol-1-phosphate dehydrogenase family. Requires Zn(2+) as cofactor.

The protein resides in the cytoplasm. The catalysed reaction is sn-glycerol 1-phosphate + NAD(+) = dihydroxyacetone phosphate + NADH + H(+). The enzyme catalyses sn-glycerol 1-phosphate + NADP(+) = dihydroxyacetone phosphate + NADPH + H(+). Its pathway is membrane lipid metabolism; glycerophospholipid metabolism. In terms of biological role, catalyzes the NAD(P)H-dependent reduction of dihydroxyacetonephosphate (DHAP or glycerone phosphate) to glycerol 1-phosphate (G1P). The G1P thus generated is used as the glycerophosphate backbone of phospholipids in the cellular membranes of Archaea. The protein is Glycerol-1-phosphate dehydrogenase [NAD(P)+] of Methanoregula boonei (strain DSM 21154 / JCM 14090 / 6A8).